The primary structure comprises 121 residues: Flagellar protein FliT (121 aa).

A required for homodimerization region spans residues 1–50 (MNNAPHLYFAWQQLVEKSQLMLRLATEEQWDELIASEMAYVNAVQEIAHL). The tract at residues 60 to 98 (MQEQLRPMLRLILDNESKVKQLLQIRMDELAKLVGQSSV) is fliD binding.

The protein belongs to the FliT family. In terms of assembly, homodimer. Interacts with FliD and FlhC.

It localises to the cytoplasm. It is found in the cytosol. Functionally, dual-function protein that regulates the transcription of class 2 flagellar operons and that also acts as an export chaperone for the filament-capping protein FliD. As a transcriptional regulator, acts as an anti-FlhDC factor; it directly binds FlhC, thus inhibiting the binding of the FlhC/FlhD complex to class 2 promoters, resulting in decreased expression of class 2 flagellar operons. As a chaperone, effects FliD transition to the membrane by preventing its premature polymerization, and by directing it to the export apparatus. The sequence is that of Flagellar protein FliT from Escherichia coli O9:H4 (strain HS).